Reading from the N-terminus, the 153-residue chain is Large ribosomal subunit protein uL22 (153 aa).

The segment at 125 to 153 (EPKEARQARKKAKSGRPAAAAKSETEKGA) is disordered.

The protein belongs to the universal ribosomal protein uL22 family. As to quaternary structure, part of the 50S ribosomal subunit.

In terms of biological role, this protein binds specifically to 23S rRNA; its binding is stimulated by other ribosomal proteins, e.g. L4, L17, and L20. It is important during the early stages of 50S assembly. It makes multiple contacts with different domains of the 23S rRNA in the assembled 50S subunit and ribosome. The globular domain of the protein is located near the polypeptide exit tunnel on the outside of the subunit, while an extended beta-hairpin is found that lines the wall of the exit tunnel in the center of the 70S ribosome. The chain is Large ribosomal subunit protein uL22 from Cutibacterium acnes (strain DSM 16379 / KPA171202) (Propionibacterium acnes).